The sequence spans 488 residues: 3-octaprenyl-4-hydroxybenzoate carboxy-lyase (488 aa).

A Mn(2+)-binding site is contributed by N172. Prenylated FMN-binding positions include 175–177, 189–191, and 194–195; these read IYR, RWL, and RG. Residue E238 coordinates Mn(2+). Residue D287 is the Proton donor of the active site.

Belongs to the UbiD family. Homohexamer. Prenylated FMN is required as a cofactor. Mn(2+) serves as cofactor.

The protein resides in the cell membrane. It catalyses the reaction a 4-hydroxy-3-(all-trans-polyprenyl)benzoate + H(+) = a 2-(all-trans-polyprenyl)phenol + CO2. It participates in cofactor biosynthesis; ubiquinone biosynthesis. Catalyzes the decarboxylation of 3-octaprenyl-4-hydroxy benzoate to 2-octaprenylphenol, an intermediate step in ubiquinone biosynthesis. The protein is 3-octaprenyl-4-hydroxybenzoate carboxy-lyase of Pseudomonas putida (strain GB-1).